A 719-amino-acid chain; its full sequence is Polyribonucleotide nucleotidyltransferase (719 aa).

D507 and D513 together coordinate Mg(2+). The 61-residue stretch at 573–633 (PKLELFSVDP…EQIKAAKDYI (61 aa)) folds into the KH domain. The S1 motif domain occupies 658–719 (GQEFQGIVKK…NGKISVDLCE (62 aa)).

The protein belongs to the polyribonucleotide nucleotidyltransferase family. The cofactor is Mg(2+).

The protein localises to the cytoplasm. It carries out the reaction RNA(n+1) + phosphate = RNA(n) + a ribonucleoside 5'-diphosphate. Functionally, involved in mRNA degradation. Catalyzes the phosphorolysis of single-stranded polyribonucleotides processively in the 3'- to 5'-direction. The chain is Polyribonucleotide nucleotidyltransferase from Campylobacter jejuni (strain RM1221).